Here is a 206-residue protein sequence, read N- to C-terminus: Urease accessory protein UreG (206 aa).

14 to 21 (GPVGSGKT) contributes to the GTP binding site.

It belongs to the SIMIBI class G3E GTPase family. UreG subfamily. Homodimer. UreD, UreF and UreG form a complex that acts as a GTP-hydrolysis-dependent molecular chaperone, activating the urease apoprotein by helping to assemble the nickel containing metallocenter of UreC. The UreE protein probably delivers the nickel.

The protein resides in the cytoplasm. Functionally, facilitates the functional incorporation of the urease nickel metallocenter. This process requires GTP hydrolysis, probably effectuated by UreG. This is Urease accessory protein UreG from Brucella anthropi (strain ATCC 49188 / DSM 6882 / CCUG 24695 / JCM 21032 / LMG 3331 / NBRC 15819 / NCTC 12168 / Alc 37) (Ochrobactrum anthropi).